A 228-amino-acid chain; its full sequence is Ribose-5-phosphate isomerase A (228 aa).

Residues 29–32 (TGST), 85–88 (DGAD), and 98–101 (KGGG) contribute to the substrate site. The active-site Proton acceptor is Glu107. Lys125 contributes to the substrate binding site.

The protein belongs to the ribose 5-phosphate isomerase family. As to quaternary structure, homodimer.

The enzyme catalyses aldehydo-D-ribose 5-phosphate = D-ribulose 5-phosphate. Its pathway is carbohydrate degradation; pentose phosphate pathway; D-ribose 5-phosphate from D-ribulose 5-phosphate (non-oxidative stage): step 1/1. Functionally, catalyzes the reversible conversion of ribose-5-phosphate to ribulose 5-phosphate. This Staphylococcus aureus (strain COL) protein is Ribose-5-phosphate isomerase A.